We begin with the raw amino-acid sequence, 373 residues long: Transaminase AMT5-2 (373 aa).

Arginine 92 lines the pyridoxal 5'-phosphate pocket. An N6-(pyridoxal phosphate)lysine modification is found at lysine 196. Glutamate 232 serves as a coordination point for pyridoxal 5'-phosphate.

The protein belongs to the class-IV pyridoxal-phosphate-dependent aminotransferase family. Pyridoxal 5'-phosphate serves as cofactor.

Its pathway is mycotoxin biosynthesis. Transaminase; part of the gene clusters that mediate the biosynthesis of AM-toxins, host-selective toxins (HSTs) causing Alternaria blotch on apple, a worldwide distributed disease. AM-toxins are cyclic depsipeptides containing the 3 residues 2-hydroxy-isovaleric acid (2-HIV), dehydroalanine, L-alanine which are common for all 3 AM-toxins I to III. The fourth precursor is L-alpha-amino-methoxyphenyl-valeric acid (L-Amv) for AM-toxin I, L-alpha-amino-phenyl-valeric acid (L-Apv) for AM-toxin II, and L-alpha-amino-hydroxyphenyl-valeric acid (L-Ahv) for AM-toxin III. AM-toxins have two target sites for affecting susceptible apple cells; they cause invagination of the plasma membrane and electrolyte loss and chloroplast disorganization. The non-ribosomal peptide synthetase AMT1 contains 4 catalytic modules and is responsible for activation of each residue in AM-toxin. The aldo-keto reductase AMT2 catalyzes the conversion of 2-keto-isovaleric acid (2-KIV) to 2-hydroxy-isovaleric acid (2-HIV), one of the precursor residues incorporated by AMT1 during AM-toxin biosynthesis, by reduction of its ketone to an alcohol. The cytochrome P450 monooxygenase AMT3 and the thioesterase AMT4 are also important for AM-toxin production, but their exact function within the AM-toxin biosynthesis are not known yet. Up to 21 proteins (including AMT1 to AMT4) are predicted to be involved in AM-toxin biosynthesis since their expression ishighly up-regulated in AM-toxin-producing cultures. In Alternaria alternata (Alternaria rot fungus), this protein is Transaminase AMT5-2.